Reading from the N-terminus, the 207-residue chain is Superoxide dismutase [Mn] (207 aa).

Mn(2+) contacts are provided by histidine 28, histidine 76, aspartate 160, and histidine 164.

This sequence belongs to the iron/manganese superoxide dismutase family. Requires Mn(2+) as cofactor.

Its subcellular location is the secreted. The catalysed reaction is 2 superoxide + 2 H(+) = H2O2 + O2. Functionally, destroys superoxide anion radicals which are normally produced within the cells and which are toxic to biological systems. This Mycolicibacterium paratuberculosis (strain ATCC BAA-968 / K-10) (Mycobacterium paratuberculosis) protein is Superoxide dismutase [Mn] (sodA).